Consider the following 284-residue polypeptide: Proteasome subunit beta 1 (284 aa).

The propeptide at 1-56 (MASHDSYTGRLPGAFMNPGTSSFTEFLASYNPDLLPGRHMTALAGGMPGNVEAPHA) is removed in mature form; by autocatalysis. Residue Thr57 is the Nucleophile of the active site.

It belongs to the peptidase T1B family. The 20S proteasome core is composed of 14 alpha and 14 beta subunits that assemble into four stacked heptameric rings, resulting in a barrel-shaped structure. The two inner rings, each composed of seven catalytic beta subunits, are sandwiched by two outer rings, each composed of seven alpha subunits. The catalytic chamber with the active sites is on the inside of the barrel. Has a gated structure, the ends of the cylinder being occluded by the N-termini of the alpha-subunits. Is capped by the proteasome-associated ATPase, ARC.

Its subcellular location is the cytoplasm. The catalysed reaction is Cleavage of peptide bonds with very broad specificity.. It functions in the pathway protein degradation; proteasomal Pup-dependent pathway. The formation of the proteasomal ATPase ARC-20S proteasome complex, likely via the docking of the C-termini of ARC into the intersubunit pockets in the alpha-rings, may trigger opening of the gate for substrate entry. Interconversion between the open-gate and close-gate conformations leads to a dynamic regulation of the 20S proteasome proteolysis activity. In terms of biological role, component of the proteasome core, a large protease complex with broad specificity involved in protein degradation. The protein is Proteasome subunit beta 1 of Thermomonospora curvata (strain ATCC 19995 / DSM 43183 / JCM 3096 / KCTC 9072 / NBRC 15933 / NCIMB 10081 / Henssen B9).